A 56-amino-acid chain; its full sequence is Envelope protein H3 (56 aa).

This sequence belongs to the orthopoxvirus OPG108 family. Post-translationally, does not contain disulfide bonds.

The protein resides in the virion membrane. Its function is as follows. Envelope protein that binds to heparan sulfate on the cell surface and might provide virion attachment to target cell. This chain is Envelope protein H3 (OPG108), found in Vaccinia virus (strain L-IVP) (VACV).